Here is a 382-residue protein sequence, read N- to C-terminus: MSLKDKTQSLFAETFGYPATHAIQAPGRVNLIGEHTDYNDGFVLPCAIDYQTVISCAKRDDRIVRVIAADYDNQTDEFSLDEPIVAHDTQQWSNYVRGVVKHLQMRNKGFGGADLVIAGNVPQGAGLSSSASLEVAVGTVFQQLYHLPLDGAQIALNGQEAENQFVGCNCGIMDQLISALGKKEHALLIDCRSLGTKAVPLPKGAAVVIINSNFKRTLVGSEYNTRREQCETGARFFQQPALRDVSLNEFNKVAHELDPVVTKRVRHVLTENARTVEAASALAQGDLKRMGELMAESHASMRDDFEITVPQIDTLVEIVKATIGDKGGVRMTGGGFGGCVVALIPEEWVPAVQDAVSQQYEAKTGIKETFYVCKPSQGAGQC.

34–37 (EHTD) serves as a coordination point for substrate. ATP is bound at residue 124 to 130 (GAGLSSS). Residues serine 130 and glutamate 162 each contribute to the Mg(2+) site. The Proton acceptor role is filled by aspartate 174. A substrate-binding site is contributed by tyrosine 223.

The protein belongs to the GHMP kinase family. GalK subfamily.

It localises to the cytoplasm. The enzyme catalyses alpha-D-galactose + ATP = alpha-D-galactose 1-phosphate + ADP + H(+). It participates in carbohydrate metabolism; galactose metabolism. Catalyzes the transfer of the gamma-phosphate of ATP to D-galactose to form alpha-D-galactose-1-phosphate (Gal-1-P). The chain is Galactokinase from Enterobacter sp. (strain 638).